We begin with the raw amino-acid sequence, 567 residues long: Urease subunit alpha (567 aa).

Positions 130-567 (GGIDTHIHFI…LPLAQRYFLF (438 aa)) constitute a Urease domain. Residues histidine 135, histidine 137, and lysine 218 each contribute to the Ni(2+) site. Residue lysine 218 is modified to N6-carboxylysine. Residue histidine 220 coordinates substrate. Ni(2+)-binding residues include histidine 247 and histidine 273. The active-site Proton donor is the histidine 321. Aspartate 361 contributes to the Ni(2+) binding site.

It belongs to the metallo-dependent hydrolases superfamily. Urease alpha subunit family. Heterotrimer of UreA (gamma), UreB (beta) and UreC (alpha) subunits. Three heterotrimers associate to form the active enzyme. Ni cation is required as a cofactor. Carboxylation allows a single lysine to coordinate two nickel ions.

It is found in the cytoplasm. It carries out the reaction urea + 2 H2O + H(+) = hydrogencarbonate + 2 NH4(+). It functions in the pathway nitrogen metabolism; urea degradation; CO(2) and NH(3) from urea (urease route): step 1/1. The protein is Urease subunit alpha of Methylobacillus flagellatus (strain ATCC 51484 / DSM 6875 / VKM B-1610 / KT).